A 109-amino-acid polypeptide reads, in one-letter code: Small ribosomal subunit protein bS16 (109 aa).

A disordered region spans residues 87–109 (ALRETPKKSAPKAKAQERAKAAG). Residues 100-109 (KAQERAKAAG) are compositionally biased toward basic and acidic residues.

The protein belongs to the bacterial ribosomal protein bS16 family.

The chain is Small ribosomal subunit protein bS16 from Rhodospirillum centenum (strain ATCC 51521 / SW).